A 190-amino-acid chain; its full sequence is MPRANEIKKGMVLNYNGKLLLAKDIDIQSPTARGAATLYKMRFSDVRTGLKVEERFKGDDIVDTVTLTRRYVDFSYVDGNEYVFMDKEDYTPYTFTKDQIEEELLFMPEGGMPDMQVLTWDGQLLALELPQTVDLEIVETAPGIKGASASARNKPATLSTGLVIQVPEYLSPGEKIRIHIEERRYMGRAD.

Belongs to the elongation factor P family.

The polypeptide is Elongation factor P-like protein (Shigella boydii serotype 4 (strain Sb227)).